The chain runs to 1375 residues: Ubiquitin carboxyl-terminal hydrolase 47 (1375 aa).

The residue at position 122 (Lys-122) is an N6-acetyllysine. The 377-residue stretch at 188–564 (VGLVNQAMTC…NAYMLIYRLK (377 aa)) folds into the USP domain. Cys-197 acts as the Nucleophile in catalysis. Residues 425–452 (DEKSPQTESCTDSGAENEGSCHSDQMSN) are disordered. Positions 430 to 452 (QTESCTDSGAENEGSCHSDQMSN) are enriched in polar residues. Catalysis depends on His-503, which acts as the Proton acceptor. Phosphoserine is present on Ser-832. 3 disordered regions span residues 840–859 (TAYQ…CERV), 880–968 (LKSL…SHSS), and 983–1024 (NGLD…ESGK). Positions 882-899 (SLSLQQQQDGDNGDSSKS) are enriched in low complexity. At Ser-910 the chain carries Phosphoserine. Basic and acidic residues predominate over residues 912–928 (LNERDSSASVDNRELEQ). Residues 929–938 (HIQTSDPENF) show a composition bias toward polar residues. A Phosphoserine modification is found at Ser-933. Positions 940 to 950 (SEERSDSDVNN) are enriched in basic and acidic residues. Low complexity predominate over residues 953–968 (STSSVDSDILSSSHSS). Positions 997-1006 (KANEGKKETW) are enriched in basic and acidic residues. A compositionally biased stretch (acidic residues) spans 1007-1020 (DTAEEDSGTDSEYD). Ser-1013 bears the Phosphoserine mark. The residue at position 1015 (Thr-1015) is a Phosphothreonine. Ser-1017 bears the Phosphoserine mark.

Belongs to the peptidase C19 family. As to quaternary structure, interacts with BTRC and FBXW11. Interacts with POLB. Expressed in skeletal muscle, heart and testis.

It is found in the cytoplasm. The enzyme catalyses Thiol-dependent hydrolysis of ester, thioester, amide, peptide and isopeptide bonds formed by the C-terminal Gly of ubiquitin (a 76-residue protein attached to proteins as an intracellular targeting signal).. Its function is as follows. Ubiquitin-specific protease that specifically deubiquitinates monoubiquitinated DNA polymerase beta (POLB), stabilizing POLB thereby playing a role in base-excision repair (BER). Acts as a regulator of cell growth and genome integrity. May also indirectly regulate CDC25A expression at a transcriptional level. This chain is Ubiquitin carboxyl-terminal hydrolase 47 (USP47), found in Homo sapiens (Human).